The primary structure comprises 445 residues: Phosphoglucosamine mutase (445 aa).

The active-site Phosphoserine intermediate is the serine 102. Mg(2+) is bound by residues serine 102, aspartate 241, aspartate 243, and aspartate 245. Serine 102 is modified (phosphoserine).

This sequence belongs to the phosphohexose mutase family. It depends on Mg(2+) as a cofactor. Activated by phosphorylation.

The catalysed reaction is alpha-D-glucosamine 1-phosphate = D-glucosamine 6-phosphate. In terms of biological role, catalyzes the conversion of glucosamine-6-phosphate to glucosamine-1-phosphate. The polypeptide is Phosphoglucosamine mutase (Variovorax paradoxus (strain S110)).